The sequence spans 463 residues: NADH-quinone oxidoreductase subunit N (463 aa).

14 helical membrane-spanning segments follow: residues 2–22 (NTLI…ILNF), 25–45 (GIVP…FYEF), 61–81 (FSTA…ALSH), 91–110 (ISDF…AMVS), 114–133 (LAMF…VLAA), 149–169 (FLMG…IYGA), 189–209 (IWFP…IAAV), 223–243 (PALT…ATLF), 264–284 (FTNV…IMAL), 292–312 (MLAF…LTIA), 317–337 (VLLY…SVIL), 362–382 (AAIL…SGFF), 395–415 (GYVA…GYYF), and 434–454 (PFLI…LGLF).

Belongs to the complex I subunit 2 family. As to quaternary structure, NDH-1 is composed of 14 different subunits. Subunits NuoA, H, J, K, L, M, N constitute the membrane sector of the complex.

Its subcellular location is the cell inner membrane. It catalyses the reaction a quinone + NADH + 5 H(+)(in) = a quinol + NAD(+) + 4 H(+)(out). NDH-1 shuttles electrons from NADH, via FMN and iron-sulfur (Fe-S) centers, to quinones in the respiratory chain. The immediate electron acceptor for the enzyme in this species is believed to be a menaquinone. Couples the redox reaction to proton translocation (for every two electrons transferred, four hydrogen ions are translocated across the cytoplasmic membrane), and thus conserves the redox energy in a proton gradient. In Flavobacterium johnsoniae (strain ATCC 17061 / DSM 2064 / JCM 8514 / BCRC 14874 / CCUG 350202 / NBRC 14942 / NCIMB 11054 / UW101) (Cytophaga johnsonae), this protein is NADH-quinone oxidoreductase subunit N.